The primary structure comprises 220 residues: Acetate CoA-transferase subunit alpha (220 aa).

Residue G24–G30 coordinates CoA.

It belongs to the 3-oxoacid CoA-transferase subunit A family. In terms of assembly, heterotetramer composed of two alpha subunits (AtoD) and two beta subunits (AtoA).

It is found in the cytoplasm. The catalysed reaction is an acyl-CoA + acetate = a carboxylate + acetyl-CoA. It catalyses the reaction acetoacetate + acetyl-CoA = acetoacetyl-CoA + acetate. It carries out the reaction butanoate + acetyl-CoA = butanoyl-CoA + acetate. The enzyme catalyses acetoacetate + butanoyl-CoA = acetoacetyl-CoA + butanoate. It participates in lipid metabolism; short-chain fatty acid metabolism. Its activity is regulated as follows. Inhibited by p-chloromercuribenzoate. In terms of biological role, coenzyme A transferase which is involved in short-chain fatty acid degradation and catalyzes the activation of short-chain fatty acids to their respective CoA thiolesters. During acetoacetate degradation, catalyzes the transfer of CoA from acetyl-CoA to acetoacetate by a mechanism involving a covalent enzyme-CoA compound as a reaction intermediate. Utilizes a variety of short chain acyl-CoA and carboxylic acid substrates but exhibits maximal activity with normal and 3-keto substrates. This is Acetate CoA-transferase subunit alpha from Escherichia coli (strain K12).